Consider the following 137-residue polypeptide: Peptide methionine sulfoxide reductase MsrB (137 aa).

Residues 9-131 (DAEWRAMLDD…NSASLRFDAT (123 aa)) enclose the MsrB domain. Residues C48, C51, C97, and C100 each coordinate Zn(2+). C120 serves as the catalytic Nucleophile.

Belongs to the MsrB Met sulfoxide reductase family. The cofactor is Zn(2+).

It carries out the reaction L-methionyl-[protein] + [thioredoxin]-disulfide + H2O = L-methionyl-(R)-S-oxide-[protein] + [thioredoxin]-dithiol. This is Peptide methionine sulfoxide reductase MsrB from Herminiimonas arsenicoxydans.